Reading from the N-terminus, the 276-residue chain is Chymotrypsin (276 aa).

Residues 1-16 (MKVALVVLALFGVSLA) form the signal peptide. Positions 17 to 45 (ASIDNIEIPPSKNIYVEPINQPEVDPSLE) are cleaved as a propeptide — activation peptide. A Peptidase S1 domain is found at 46 to 272 (IVNGQEVVPH…YLNWLQTHSE (227 aa)). A disulfide bridge connects residues Cys74 and Cys90. Active-site charge relay system residues include His89 and Asp135. Asn144 and Asn193 each carry an N-linked (GlcNAc...) asparagine glycan. 2 disulfides stabilise this stretch: Cys202–Cys215 and Cys225–Cys250. The active-site Charge relay system is Ser229.

It belongs to the peptidase S1 family. Expressed in larval carcasses and gut, and adult gut.

The protein localises to the secreted. It localises to the extracellular space. It catalyses the reaction Preferential cleavage: Tyr-|-Xaa, Trp-|-Xaa, Phe-|-Xaa, Leu-|-Xaa.. Its function is as follows. Serine protease with chymotryptic and collagenolytic activities. In Phaedon cochleariae (Mustard beetle), this protein is Chymotrypsin.